We begin with the raw amino-acid sequence, 448 residues long: Adenylyltransferase and sulfurtransferase UBA4 (448 aa).

ATP-binding positions include glycine 88, aspartate 109, 116-120, lysine 133, and 177-178; these read SNLHR and DT. Zn(2+) contacts are provided by cysteine 219 and cysteine 222. Cysteine 236 acts as the Glycyl thioester intermediate; for adenylyltransferase activity in catalysis. Zn(2+)-binding residues include cysteine 297 and cysteine 300. The 98-residue stretch at 349-446 folds into the Rhodanese domain; the sequence is QGENSILIDV…WSKEIDSKIP (98 aa). Cysteine 405 functions as the Cysteine persulfide intermediate; for sulfurtransferase activity in the catalytic mechanism.

The protein in the N-terminal section; belongs to the HesA/MoeB/ThiF family. UBA4 subfamily. Zn(2+) is required as a cofactor.

The protein localises to the cytoplasm. The protein resides in the cytosol. It functions in the pathway tRNA modification; 5-methoxycarbonylmethyl-2-thiouridine-tRNA biosynthesis. Plays a central role in 2-thiolation of mcm(5)S(2)U at tRNA wobble positions of cytosolic tRNA(Lys), tRNA(Glu) and tRNA(Gln). Acts by mediating the C-terminal thiocarboxylation of sulfur carrier URM1. Its N-terminus first activates URM1 as acyl-adenylate (-COAMP), then the persulfide sulfur on the catalytic cysteine is transferred to URM1 to form thiocarboxylation (-COSH) of its C-terminus. The reaction probably involves hydrogen sulfide that is generated from the persulfide intermediate and that acts as a nucleophile towards URM1. Subsequently, a transient disulfide bond is formed. Does not use thiosulfate as sulfur donor; NFS1 probably acting as a sulfur donor for thiocarboxylation reactions. Prior mcm(5) tRNA modification by the elongator complex is required for 2-thiolation. May also be involved in protein urmylation. The protein is Adenylyltransferase and sulfurtransferase UBA4 of Debaryomyces hansenii (strain ATCC 36239 / CBS 767 / BCRC 21394 / JCM 1990 / NBRC 0083 / IGC 2968) (Yeast).